The primary structure comprises 263 residues: uncharacterized protein (263 aa).

Helical transmembrane passes span Met-1–Gln-21, Leu-38–Tyr-58, Ile-82–Val-102, Gly-118–Tyr-138, Gly-151–Leu-171, Phe-196–Thr-216, and Phe-230–Val-250.

Its subcellular location is the membrane. This is an uncharacterized protein from Saccharomyces cerevisiae (strain ATCC 204508 / S288c) (Baker's yeast).